Here is a 237-residue protein sequence, read N- to C-terminus: Ribonuclease PH (237 aa).

Residues arginine 86 and 124–126 (GTR) contribute to the phosphate site.

This sequence belongs to the RNase PH family. Homohexameric ring arranged as a trimer of dimers.

It carries out the reaction tRNA(n+1) + phosphate = tRNA(n) + a ribonucleoside 5'-diphosphate. In terms of biological role, phosphorolytic 3'-5' exoribonuclease that plays an important role in tRNA 3'-end maturation. Removes nucleotide residues following the 3'-CCA terminus of tRNAs; can also add nucleotides to the ends of RNA molecules by using nucleoside diphosphates as substrates, but this may not be physiologically important. Probably plays a role in initiation of 16S rRNA degradation (leading to ribosome degradation) during starvation. In Xanthobacter autotrophicus (strain ATCC BAA-1158 / Py2), this protein is Ribonuclease PH.